The following is a 427-amino-acid chain: Adenylosuccinate synthetase (427 aa).

Residues 12-18 and 40-42 each bind GTP; these read GDEGKGK and GHT. Residue D13 is the Proton acceptor of the active site. Residues D13 and G40 each contribute to the Mg(2+) site. IMP-binding positions include 13-16, 38-41, T128, R142, Q223, T238, and R302; these read DEGK and NAGH. H41 serves as the catalytic Proton donor. Residue 298–304 participates in substrate binding; sequence TTTGRAR. GTP is bound by residues R304, 330 to 332, and 412 to 414; these read KLD and AVG.

The protein belongs to the adenylosuccinate synthetase family. In terms of assembly, homodimer. Requires Mg(2+) as cofactor.

Its subcellular location is the cytoplasm. It carries out the reaction IMP + L-aspartate + GTP = N(6)-(1,2-dicarboxyethyl)-AMP + GDP + phosphate + 2 H(+). The protein operates within purine metabolism; AMP biosynthesis via de novo pathway; AMP from IMP: step 1/2. Its function is as follows. Plays an important role in the de novo pathway of purine nucleotide biosynthesis. Catalyzes the first committed step in the biosynthesis of AMP from IMP. The sequence is that of Adenylosuccinate synthetase from Desulfitobacterium hafniense (strain Y51).